Consider the following 278-residue polypeptide: Adenosylcobinamide-GDP ribazoletransferase (278 aa).

The next 6 membrane-spanning stretches (helical) occupy residues 44–64, 69–89, 121–141, 161–181, 204–224, and 227–247; these read GIGVVVGGAAAAMFALLQLLL, FTPLVAAAFSTVATVWLTGGF, AFGAMALVLALLCKVALLALL, VCAALWTGHIVSRGLPLVMIW, GGLAIAFSWCFGALALASLAL, and INLIVACGFSVLALLGLLRFF.

This sequence belongs to the CobS family. Requires Mg(2+) as cofactor.

It localises to the cell inner membrane. It carries out the reaction alpha-ribazole + adenosylcob(III)inamide-GDP = adenosylcob(III)alamin + GMP + H(+). The enzyme catalyses alpha-ribazole 5'-phosphate + adenosylcob(III)inamide-GDP = adenosylcob(III)alamin 5'-phosphate + GMP + H(+). It participates in cofactor biosynthesis; adenosylcobalamin biosynthesis; adenosylcobalamin from cob(II)yrinate a,c-diamide: step 7/7. In terms of biological role, joins adenosylcobinamide-GDP and alpha-ribazole to generate adenosylcobalamin (Ado-cobalamin). Also synthesizes adenosylcobalamin 5'-phosphate from adenosylcobinamide-GDP and alpha-ribazole 5'-phosphate. The chain is Adenosylcobinamide-GDP ribazoletransferase from Polaromonas naphthalenivorans (strain CJ2).